The sequence spans 386 residues: Diaminopimelate decarboxylase (386 aa).

Lys-46 bears the N6-(pyridoxal phosphate)lysine mark. Pyridoxal 5'-phosphate is bound by residues Gly-214 and 246 to 249 (EIGR). Positions 249, 285, and 289 each coordinate substrate. The active-site Proton donor is Cys-314. Residues Glu-315 and Tyr-343 each coordinate substrate. Residue Tyr-343 participates in pyridoxal 5'-phosphate binding.

The protein belongs to the Orn/Lys/Arg decarboxylase class-II family. LysA subfamily. In terms of assembly, homodimer. The cofactor is pyridoxal 5'-phosphate.

The catalysed reaction is meso-2,6-diaminopimelate + H(+) = L-lysine + CO2. Its pathway is amino-acid biosynthesis; L-lysine biosynthesis via DAP pathway; L-lysine from DL-2,6-diaminopimelate: step 1/1. In terms of biological role, specifically catalyzes the decarboxylation of meso-diaminopimelate (meso-DAP) to L-lysine. This Thermotoga maritima (strain ATCC 43589 / DSM 3109 / JCM 10099 / NBRC 100826 / MSB8) protein is Diaminopimelate decarboxylase.